Reading from the N-terminus, the 277-residue chain is 3-methyl-2-oxobutanoate hydroxymethyltransferase (277 aa).

Mg(2+) contacts are provided by D49 and D88. Residues 49-50, D88, and K118 each bind 3-methyl-2-oxobutanoate; that span reads DS. E120 is a Mg(2+) binding site. The active-site Proton acceptor is the E186.

Belongs to the PanB family. Homodecamer; pentamer of dimers. It depends on Mg(2+) as a cofactor.

It is found in the cytoplasm. It catalyses the reaction 3-methyl-2-oxobutanoate + (6R)-5,10-methylene-5,6,7,8-tetrahydrofolate + H2O = 2-dehydropantoate + (6S)-5,6,7,8-tetrahydrofolate. It functions in the pathway cofactor biosynthesis; (R)-pantothenate biosynthesis; (R)-pantoate from 3-methyl-2-oxobutanoate: step 1/2. Functionally, catalyzes the reversible reaction in which hydroxymethyl group from 5,10-methylenetetrahydrofolate is transferred onto alpha-ketoisovalerate to form ketopantoate. The protein is 3-methyl-2-oxobutanoate hydroxymethyltransferase of Cereibacter sphaeroides (strain ATCC 17025 / ATH 2.4.3) (Rhodobacter sphaeroides).